A 267-amino-acid polypeptide reads, in one-letter code: Ribosomal RNA small subunit methyltransferase A (267 aa).

Asparagine 16, leucine 18, glycine 43, glutamate 64, aspartate 88, and asparagine 109 together coordinate S-adenosyl-L-methionine.

Belongs to the class I-like SAM-binding methyltransferase superfamily. rRNA adenine N(6)-methyltransferase family. RsmA subfamily.

It is found in the cytoplasm. The enzyme catalyses adenosine(1518)/adenosine(1519) in 16S rRNA + 4 S-adenosyl-L-methionine = N(6)-dimethyladenosine(1518)/N(6)-dimethyladenosine(1519) in 16S rRNA + 4 S-adenosyl-L-homocysteine + 4 H(+). Specifically dimethylates two adjacent adenosines (A1518 and A1519) in the loop of a conserved hairpin near the 3'-end of 16S rRNA in the 30S particle. May play a critical role in biogenesis of 30S subunits. The chain is Ribosomal RNA small subunit methyltransferase A from Acidithiobacillus ferrooxidans (strain ATCC 23270 / DSM 14882 / CIP 104768 / NCIMB 8455) (Ferrobacillus ferrooxidans (strain ATCC 23270)).